The following is a 702-amino-acid chain: Polyribonucleotide nucleotidyltransferase (702 aa).

2 residues coordinate Mg(2+): aspartate 491 and aspartate 497. The KH domain occupies 558 to 618 (PKMKTFMIPV…TAIEKAYQLI (61 aa)). In terms of domain architecture, S1 motif spans 628 to 696 (GEKIIGPVVK…GKGKIKLQLI (69 aa)).

It belongs to the polyribonucleotide nucleotidyltransferase family. Requires Mg(2+) as cofactor.

The protein localises to the cytoplasm. It catalyses the reaction RNA(n+1) + phosphate = RNA(n) + a ribonucleoside 5'-diphosphate. In terms of biological role, involved in mRNA degradation. Catalyzes the phosphorolysis of single-stranded polyribonucleotides processively in the 3'- to 5'-direction. The sequence is that of Polyribonucleotide nucleotidyltransferase from Spiroplasma citri.